We begin with the raw amino-acid sequence, 246 residues long: Orotidine 5'-phosphate decarboxylase (246 aa).

Substrate contacts are provided by residues Asp-22, Lys-44, 71–80 (DLKYHDIPHT), Thr-130, Arg-191, Gln-201, Gly-221, and Arg-222. Residue Lys-73 is the Proton donor of the active site.

It belongs to the OMP decarboxylase family. Type 1 subfamily. In terms of assembly, homodimer.

The enzyme catalyses orotidine 5'-phosphate + H(+) = UMP + CO2. The protein operates within pyrimidine metabolism; UMP biosynthesis via de novo pathway; UMP from orotate: step 2/2. Its function is as follows. Catalyzes the decarboxylation of orotidine 5'-monophosphate (OMP) to uridine 5'-monophosphate (UMP). The chain is Orotidine 5'-phosphate decarboxylase from Neisseria meningitidis serogroup B (strain ATCC BAA-335 / MC58).